The chain runs to 119 residues: MKIFSVALSMLRPVRFLIVAFTCALLFLSSTVPAFAISSYQSEPTEATDQLLETQKATDEVARSAPLGLKEVQKKSNEGLNEVQGAADINKQKRPANSQDSSSVEGDIQNFLEKVTGKN.

The segment at S64–N119 is disordered. Positions P95 to V104 are enriched in polar residues.

This is an uncharacterized protein from Nostoc sp. (strain PCC 7120 / SAG 25.82 / UTEX 2576).